The following is a 321-amino-acid chain: Small ribosomal subunit biogenesis GTPase RsgA (321 aa).

In terms of domain architecture, CP-type G spans 89 to 248; it reads QSWINRPPVA…VADTPGFNRP (160 aa). GTP is bound by residues 138–141 and 190–198; these read TKRD and GPSGVGKTS. Zn(2+) contacts are provided by Cys273, Cys278, His280, and Cys286.

This sequence belongs to the TRAFAC class YlqF/YawG GTPase family. RsgA subfamily. Monomer. Associates with 30S ribosomal subunit, binds 16S rRNA. Zn(2+) is required as a cofactor.

It is found in the cytoplasm. One of several proteins that assist in the late maturation steps of the functional core of the 30S ribosomal subunit. Helps release RbfA from mature subunits. May play a role in the assembly of ribosomal proteins into the subunit. Circularly permuted GTPase that catalyzes slow GTP hydrolysis, GTPase activity is stimulated by the 30S ribosomal subunit. This chain is Small ribosomal subunit biogenesis GTPase RsgA, found in Prochlorococcus marinus (strain MIT 9303).